The primary structure comprises 120 residues: Large ribosomal subunit protein bL20c (120 aa).

This sequence belongs to the bacterial ribosomal protein bL20 family.

Its subcellular location is the plastid. Its function is as follows. Binds directly to 23S ribosomal RNA and is necessary for the in vitro assembly process of the 50S ribosomal subunit. It is not involved in the protein synthesizing functions of that subunit. The sequence is that of Large ribosomal subunit protein bL20c (rpl20) from Cuscuta gronovii (Common dodder).